Here is a 543-residue protein sequence, read N- to C-terminus: Vibriobactin-specific 2,3-dihydroxybenzoate-AMP ligase (543 aa).

The helical transmembrane segment at Phe240–Leu259 threads the bilayer.

The protein belongs to the ATP-dependent AMP-binding enzyme family.

The protein resides in the cell inner membrane. The catalysed reaction is 2,3-dihydroxybenzoate + holo-[ACP] + ATP = 2,3-dihydroxybenzoyl-[ACP] + AMP + diphosphate. It functions in the pathway siderophore biosynthesis; vibriobactin biosynthesis. In terms of biological role, activation of the carboxylate group of 2,3-dihydroxy-benzoate (DHB), via ATP-dependent PPi exchange reactions, to the acyladenylate, preparing that molecule for the final stages of vibriobactin synthesis. This Vibrio cholerae serotype O1 (strain ATCC 39315 / El Tor Inaba N16961) protein is Vibriobactin-specific 2,3-dihydroxybenzoate-AMP ligase (vibE).